Here is a 462-residue protein sequence, read N- to C-terminus: O-methyltransferase CTB2 (462 aa).

D289 contacts S-adenosyl-L-methionine. H340 (proton acceptor) is an active-site residue.

The protein belongs to the class I-like SAM-binding methyltransferase superfamily. Cation-independent O-methyltransferase family. COMT subfamily.

Its pathway is mycotoxin biosynthesis. O-methyltransferase; part of the gene cluster that mediates the biosynthesis of cercosporin, a light-activated, non-host-selective toxin. The perylenequinone chromophore of cercosporin absorbs light energy to attain an electronically-activated triplet state and produces active oxygen species such as the hydroxyl radical, superoxide, hydrogen peroxide or singlet oxygen upon reaction with oxygen molecules. These reactive oxygen species cause damage to various cellular components including lipids, proteins and nucleic acids. The first step of cercosporin biosynthesis is performed by the polyketide synthase CTB1 which catalyzes the formation of nor-toralactone. The starter unit acyltransferase (SAT) domain of CTB1 initiates polyketide extension by the selective utilization of acetyl-CoA, which is elongated to the heptaketide in the beta-ketoacyl synthase (KS) domain by successive condensations with six malonyl units introduced by the malonyl acyltransferase (MAT) domain. The product template (PT) domain catalyzes C4-C9 and C2-C11 aldol cyclizations and dehydrations to a trihydroxynaphthalene, which is thought to be delivered to the thioesterase (TE) domain for product release. The bifunctional enzyme CTB3 then methylates nor-toralactone to toralactone before conducting an unusual oxidative aromatic ring opening. The O-methyltransferase CTB2 further methylates the nascent OH-6 of the CBT3 product, blocking further oxidation at this site before the reductase CTB6 reduces the 2-oxopropyl ketone at position C7, giving naphthalene. The FAD-dependent monooxygenase CTB5 in concert with the multicopper oxidase CTB12 are responsible for homodimerization of naphthalene with CTB7 installing the dioxepine moiety, finally producing cercosporin. The fasciclin domain-containing protein CTB11 might act with CTB5 and CTB12 whereas the roles of CTB9 and CTB10 have still to be elucidated. This is O-methyltransferase CTB2 from Cercospora beticola (Sugarbeet leaf spot fungus).